The following is a 313-amino-acid chain: Transcription initiation factor IIB 2 (313 aa).

The TFIIB-type zinc-finger motif lies at 13-44 (APKRCPECHSEHLIRDYEHGELICADCGAVIE). Zn(2+) is bound by residues Cys17, Cys20, Cys36, and Cys39. Repeat copies occupy residues 130 to 213 (QLLN…AKEL) and 224 to 305 (SYIA…EISK).

This sequence belongs to the TFIIB family.

Stabilizes TBP binding to an archaeal box-A promoter. Also responsible for recruiting RNA polymerase II to the pre-initiation complex (DNA-TBP-TFIIB). The chain is Transcription initiation factor IIB 2 from Thermoplasma volcanium (strain ATCC 51530 / DSM 4299 / JCM 9571 / NBRC 15438 / GSS1).